Here is a 1359-residue protein sequence, read N- to C-terminus: NPC1-like intracellular cholesterol transporter 1 (1359 aa).

The N-terminal stretch at 1–21 is a signal peptide; it reads MAEAGLRGWLLWALLLRLAQS. The Extracellular portion of the chain corresponds to 22–284; it reads EPYTTIHQPG…TFYLGQMPGS (263 aa). 9 disulfide bridges follow: cysteine 33/cysteine 90, cysteine 39/cysteine 57, cysteine 78/cysteine 125, cysteine 91/cysteine 129, cysteine 113/cysteine 254, cysteine 116/cysteine 172, cysteine 189/cysteine 197, cysteine 243/cysteine 259, and cysteine 256/cysteine 263. Residue asparagine 54 is glycosylated (N-linked (GlcNAc...) asparagine). 2 N-linked (GlcNAc...) asparagine glycosylation sites follow: asparagine 132 and asparagine 138. A glycan (N-linked (GlcNAc...) asparagine) is linked at asparagine 244. Residues 285 to 305 form a helical membrane-spanning segment; it reads LVLIIILCSVFAVVTILLVGF. Topologically, residues 306–351 are cytoplasmic; it reads RVAPARDKSKMVDPKKGTSLSDKLSFSTHTLLGQFFQGWGTWVASW. Residues 352–372 traverse the membrane as a helical segment; the sequence is PLTILVLSVIPVVALAAGLVF. Residues 373–632 are Extracellular-facing; it reads TELTTDPVEL…DEINRTTAED (260 aa). Residues asparagine 416, asparagine 431, asparagine 464, asparagine 479, asparagine 497, and asparagine 506 are each glycosylated (N-linked (GlcNAc...) asparagine). A disulfide bridge links cysteine 471 with cysteine 485. A disulfide bridge links cysteine 525 with cysteine 542. An N-linked (GlcNAc...) asparagine glycan is attached at asparagine 626. In terms of domain architecture, SSD spans 632–797; it reads DLPIFATSYI…MSAFVALLSL (166 aa). The chain crosses the membrane as a helical span at residues 633-653; it reads LPIFATSYIVIFLYISLALGS. Topologically, residues 654 to 666 are cytoplasmic; the sequence is YSSWSRVMVDSKA. The helical transmembrane segment at 667-687 threads the bilayer; it reads TLGLGGVAVVLGAVMAAMGFF. At 688–696 the chain is on the extracellular side; sequence SYLGIRSSL. Residues 697–717 form a helical membrane-spanning segment; that stretch reads VILQVVPFLVLSVGADNIFIF. Residues 718-742 lie on the Cytoplasmic side of the membrane; the sequence is VLEYQRLPRRPGEPREVHIGRALGR. The helical transmembrane segment at 743–763 threads the bilayer; sequence VAPSMLLCSLSEAICFFLGAL. The Extracellular portion of the chain corresponds to 764-776; sequence TPMPAVRTFALTS. A helical transmembrane segment spans residues 777 to 797; the sequence is GLAVILDFLLQMSAFVALLSL. Residues 798–846 lie on the Cytoplasmic side of the membrane; the sequence is DSKRQEASRLDVCCCVKPQELPPPGQGEGLLLGFFQKAYAPFLLHWITR. A helical membrane pass occupies residues 847–867; it reads GVVLLLFLALFGVSLYSMCHI. At 868 to 1139 the chain is on the extracellular side; that stretch reads SVGLDQELAL…EQYLTILPEG (272 aa). 3 cysteine pairs are disulfide-bonded: cysteine 920–cysteine 925, cysteine 966–cysteine 1024, and cysteine 980–cysteine 989. The helical transmembrane segment at 1140 to 1160 threads the bilayer; it reads LFMLSLCLVPTFAVSCLLLGL. Residues 1161 to 1168 are Cytoplasmic-facing; the sequence is DLRSGLLN. The helical transmembrane segment at 1169–1189 threads the bilayer; sequence LLSIVMILVDTVGFMALWGIS. Topologically, residues 1190-1191 are extracellular; it reads YN. Residues 1192-1212 form a helical membrane-spanning segment; the sequence is AVSLINLVSAVGMSVEFVSHI. At 1213–1236 the chain is on the cytoplasmic side; it reads TRSFAISTKPTWLERAKEATISMG. Residues 1237 to 1257 form a helical membrane-spanning segment; the sequence is SAVFAGVAMTNLPGILVLGLA. Residues 1258–1268 are Extracellular-facing; the sequence is KAQLIQIFFFR. Residues 1269–1289 form a helical membrane-spanning segment; sequence LNLLITLLGLLHGLVFLPVIL. The Cytoplasmic portion of the chain corresponds to 1290–1359; the sequence is SYVGPDVNPA…NFLPNNGRQF (70 aa).

Belongs to the patched family. As to quaternary structure, interacts with RAB11A, MYO5B and RAB11FIP2. Interaction with RAB11A, MYO5B and RAB11FIP2 is required for proper transport to the plasma membrane upon cholesterol depletion. Interacts with NPC2. Interacts with LIMA1. In terms of processing, highly glycosylated. As to expression, widely expressed. Expressed in liver. Also expressed in small intestine, pancreas, kidney, lung, pancreas, spleen, heart, gall bladder, brain, testis, stomach and muscle.

The protein resides in the apical cell membrane. Its subcellular location is the cell membrane. It is found in the cytoplasmic vesicle membrane. The catalysed reaction is cholesterol(in) = cholesterol(out). It catalyses the reaction sitosterol(out) = sitosterol(in). Its function is as follows. Plays a major role in cholesterol homeostasis. Critical for the uptake of cholesterol across the plasma membrane of the intestinal enterocyte. Involved in plant sterol absorption, it transports sitosterol, although at lower rates than cholesterol. Is the direct molecular target of ezetimibe, a drug that inhibits cholesterol absorption and is approved for the treatment of hypercholesterolemia. May have a function in the transport of multiple lipids and their homeostasis, thereby influencing lipid metabolism regulation. May be involved in caveolin trafficking from the plasma membrane. In addition, acts as a negative regulator of NPC2 and down-regulates its expression and secretion by inhibiting its maturation and accelerating its degradation. This is NPC1-like intracellular cholesterol transporter 1 from Homo sapiens (Human).